A 201-amino-acid polypeptide reads, in one-letter code: Ribosome maturation factor RimM (201 aa).

A PRC barrel domain is found at 92–166; it reads DEDEFYHADL…RVVVEPPANF (75 aa). Residues 169 to 201 are disordered; that stretch reads PAGPQPAEGEEMPDGALEALEGEEAGAGTAPQP.

Belongs to the RimM family. Binds ribosomal protein uS19.

Its subcellular location is the cytoplasm. In terms of biological role, an accessory protein needed during the final step in the assembly of 30S ribosomal subunit, possibly for assembly of the head region. Essential for efficient processing of 16S rRNA. May be needed both before and after RbfA during the maturation of 16S rRNA. It has affinity for free ribosomal 30S subunits but not for 70S ribosomes. This Rhodospirillum centenum (strain ATCC 51521 / SW) protein is Ribosome maturation factor RimM.